The chain runs to 342 residues: Prostasin (342 aa).

The first 29 residues, 1-29, serve as a signal peptide directing secretion; that stretch reads MAPRVGLGLGQLEAVTILLLLGLLQSGIR. Residues 30–32 constitute a propeptide, activation peptide; it reads ADG. 2 disulfides stabilise this stretch: C37-C154 and C70-C86. Residues 45 to 286 enclose the Peptidase S1 domain; it reads ITGGGSAKPG…YASWIHHHVA (242 aa). The active-site Charge relay system is H85. Residue N110 is glycosylated (N-linked (GlcNAc...) asparagine). The active-site Charge relay system is the D134. N-linked (GlcNAc...) asparagine glycosylation occurs at N159. Intrachain disulfides connect C168–C244, C201–C223, and C234–C262. S238 functions as the Charge relay system in the catalytic mechanism. Residues 320–340 form a helical membrane-spanning segment; it reads LLRPVLFLPLGLTLGLLSLWL. A propeptide spanning residues 323-342 is cleaved from the precursor; sequence PVLFLPLGLTLGLLSLWLEH.

The protein belongs to the peptidase S1 family. Heterodimer of two chains, light and heavy, held by a disulfide bond.

The protein resides in the cell membrane. The protein localises to the secreted. It is found in the extracellular space. Functionally, possesses a trypsin-like cleavage specificity with a preference for poly-basic substrates. Stimulates epithelial sodium channel (ENaC) activity through activating cleavage of the gamma subunits (SCNN1G). The polypeptide is Prostasin (Prss8) (Mus musculus (Mouse)).